A 1001-amino-acid chain; its full sequence is Serine/threonine-protein kinase TAO1-B (1001 aa).

The Protein kinase domain occupies Phe28–Val281. ATP is bound by residues Ile34–Val42 and Lys57. Asp151 serves as the catalytic Proton acceptor. Disordered regions lie at residues Pro324 to Arg435 and Lys567 to Ser586. Positions Ser350–Ser370 are enriched in low complexity. Basic and acidic residues-rich tracts occupy residues Ser375–His388 and Pro577–Ser586. 2 coiled-coil regions span residues Ser458–Met651 and Lys754–Ala877. The segment at Ser911–Thr1001 is disordered. Over residues His921–Pro930 the composition is skewed to low complexity. Polar residues-rich tracts occupy residues Gly949–Gln967 and Gly975–Thr1001.

Belongs to the protein kinase superfamily. STE Ser/Thr protein kinase family. STE20 subfamily.

The protein resides in the cytoplasm. The enzyme catalyses L-seryl-[protein] + ATP = O-phospho-L-seryl-[protein] + ADP + H(+). The catalysed reaction is L-threonyl-[protein] + ATP = O-phospho-L-threonyl-[protein] + ADP + H(+). Its function is as follows. Serine/threonine-protein kinase involved in various processes such as p38/mapk14 stress-activated MAPK cascade, DNA damage response and regulation of cytoskeleton stability. Acts as an activator of the p38/MAPK14 stress-activated MAPK cascade by mediating phosphorylation and subsequent activation of upstream MAP kinase kinases. In response to DNA damage, involved in the G2/M transition DNA damage checkpoint by activating the p38/MAPK14 stress-activated MAPK cascade. This chain is Serine/threonine-protein kinase TAO1-B (taok1-b), found in Xenopus laevis (African clawed frog).